The following is a 366-amino-acid chain: Beta sliding clamp (366 aa).

The protein belongs to the beta sliding clamp family. As to quaternary structure, forms a ring-shaped head-to-tail homodimer around DNA which binds and tethers DNA polymerases and other proteins to the DNA. The DNA replisome complex has a single clamp-loading complex (3 tau and 1 each of delta, delta', psi and chi subunits) which binds 3 Pol III cores (1 core on the leading strand and 2 on the lagging strand) each with a beta sliding clamp dimer. Additional proteins in the replisome are other copies of gamma, psi and chi, Ssb, DNA helicase and RNA primase.

The protein resides in the cytoplasm. Functionally, confers DNA tethering and processivity to DNA polymerases and other proteins. Acts as a clamp, forming a ring around DNA (a reaction catalyzed by the clamp-loading complex) which diffuses in an ATP-independent manner freely and bidirectionally along dsDNA. Initially characterized for its ability to contact the catalytic subunit of DNA polymerase III (Pol III), a complex, multichain enzyme responsible for most of the replicative synthesis in bacteria; Pol III exhibits 3'-5' exonuclease proofreading activity. The beta chain is required for initiation of replication as well as for processivity of DNA replication. The protein is Beta sliding clamp (dnaN) of Salmonella typhimurium (strain LT2 / SGSC1412 / ATCC 700720).